The chain runs to 348 residues: MKTLVLLLCFTLLWGCQSAPQGTGLGFREVACDDPEVEQVALTAVDYLNQHLLQGFKHILNQIDKVKVWSRRPFGEVYELELDTLETTCHALDPTPLANCSVRQLAQHAVEGDCDFHILKQDGQFSVMHTKCHSNPDSAEDVRKVCPHCALLTPFNSSNVVYAVNAALGAFNEKNNKTYFKLVELARAQTVPFPPSTHVEFVIAATDCAAPKVADPAKCNLLAEKQYSFCKASLFQNLGGEEVTVTCTAFPTQANGVTPASPAPAVEKGIPVALPDAPPASLVVGPMVVPAEHLPHKTHHDLRHAFSPVASVESASGEAFQSPTQAGNAGAAGPAVPLCPGRVRHFKI.

Residues 1-18 form the signal peptide; the sequence is MKTLVLLLCFTLLWGCQS. One can recognise a Cystatin fetuin-A-type 1 domain in the interval 19 to 133; it reads APQGTGLGFR…QFSVMHTKCH (115 aa). 6 disulfide bridges follow: Cys32–Cys339, Cys89–Cys100, Cys114–Cys132, Cys146–Cys149, Cys208–Cys219, and Cys230–Cys247. Residue Asn99 is glycosylated (N-linked (GlcNAc...) asparagine). Phosphoserine is present on residues Ser134 and Ser138. Positions 144–255 constitute a Cystatin fetuin-A-type 2 domain; the sequence is KVCPHCALLT…TCTAFPTQAN (112 aa). 2 N-linked (GlcNAc...) asparagine glycosylation sites follow: Asn156 and Asn176. Phosphoserine occurs at positions 307, 311, 314, and 316.

Belongs to the fetuin family. In terms of processing, phosphorylated by FAM20C in the extracellular medium. Expressed by the liver and secreted in plasma.

The protein localises to the secreted. This Meriones unguiculatus (Mongolian jird) protein is Alpha-2-HS-glycoprotein (AHSG).